The following is a 115-amino-acid chain: Large ribosomal subunit protein bL20 (115 aa).

It belongs to the bacterial ribosomal protein bL20 family.

Binds directly to 23S ribosomal RNA and is necessary for the in vitro assembly process of the 50S ribosomal subunit. It is not involved in the protein synthesizing functions of that subunit. The protein is Large ribosomal subunit protein bL20 of Prochlorococcus marinus subsp. pastoris (strain CCMP1986 / NIES-2087 / MED4).